A 473-amino-acid chain; its full sequence is Pentatricopeptide repeat-containing protein At3g60050 (473 aa).

PPR repeat units lie at residues 148-182 (TVNS…GFPT), 183-217 (TART…NYRP), 218-252 (FKHS…GFSP), 253-287 (DVLT…GFSP), 288-322 (DSYT…GIDP), 323-357 (SVLH…GCRP), 358-392 (DVVC…GQLP), 393-427 (NVFT…GCNP), and 428-462 (NFVV…GHYV).

Belongs to the PPR family. P subfamily.

The sequence is that of Pentatricopeptide repeat-containing protein At3g60050 from Arabidopsis thaliana (Mouse-ear cress).